The primary structure comprises 447 residues: NADH-ubiquinone oxidoreductase chain 4 (447 aa).

13 helical membrane-spanning segments follow: residues 28 to 48 (IFLATCLFMIKISSNYYFCDI), 56 to 76 (MISYGLILLSFWICGLMLMAS), 85 to 105 (YVNLFLFMIVFLLLMLIFTFS), 110 to 130 (FMFYLFFESSLIPTLFLILGW), 141 to 161 (IYLLFYTLLASLPLLIGIFYI), 183 to 203 (FLYLCMIFAFLVKMPMFLVHL), 213 to 233 (PVSGSMILAGVLLKLGGYGLL), 246 to 266 (FNYIWISISLIGGVLVSLICL), 273 to 293 (ALIAYSSVAHMGIVLSGLMTM), 301 to 321 (SYTLMIAHGLCSSGLFCLANI), 343 to 365 (SLSLWWFLLCSGNMAAPPTLNLL), 380 to 400 (LTMISLAFLSFFSAAYTLYLF), and 409 to 431 (YSGVYFFSSGTTREFLVLMLHWL).

Belongs to the complex I subunit 4 family.

It is found in the mitochondrion membrane. The enzyme catalyses a ubiquinone + NADH + 5 H(+)(in) = a ubiquinol + NAD(+) + 4 H(+)(out). Functionally, core subunit of the mitochondrial membrane respiratory chain NADH dehydrogenase (Complex I) that is believed to belong to the minimal assembly required for catalysis. Complex I functions in the transfer of electrons from NADH to the respiratory chain. The immediate electron acceptor for the enzyme is believed to be ubiquinone. The chain is NADH-ubiquinone oxidoreductase chain 4 from Aedes aegypti (Yellowfever mosquito).